We begin with the raw amino-acid sequence, 441 residues long: Cobyrinate a,c-diamide synthase (441 aa).

Residues 243–434 (TVAVADDAAF…AHVHPESTAF (192 aa)) enclose the GATase cobBQ-type domain. Cysteine 323 (nucleophile) is an active-site residue.

The protein belongs to the CobB/CbiA family. It depends on Mg(2+) as a cofactor.

The catalysed reaction is cob(II)yrinate + 2 L-glutamine + 2 ATP + 2 H2O = cob(II)yrinate a,c diamide + 2 L-glutamate + 2 ADP + 2 phosphate + 2 H(+). The protein operates within cofactor biosynthesis; adenosylcobalamin biosynthesis; cob(II)yrinate a,c-diamide from sirohydrochlorin (anaerobic route): step 10/10. Catalyzes the ATP-dependent amidation of the two carboxylate groups at positions a and c of cobyrinate, using either L-glutamine or ammonia as the nitrogen source. This is Cobyrinate a,c-diamide synthase from Halobacterium salinarum (strain ATCC 700922 / JCM 11081 / NRC-1) (Halobacterium halobium).